The sequence spans 166 residues: Small ribosomal subunit protein uS5 (166 aa).

In terms of domain architecture, S5 DRBM spans 11–74 (LQEKLIAVNR…EKARRNMINV (64 aa)).

The protein belongs to the universal ribosomal protein uS5 family. As to quaternary structure, part of the 30S ribosomal subunit. Contacts proteins S4 and S8.

Functionally, with S4 and S12 plays an important role in translational accuracy. Its function is as follows. Located at the back of the 30S subunit body where it stabilizes the conformation of the head with respect to the body. The polypeptide is Small ribosomal subunit protein uS5 (Pasteurella multocida (strain Pm70)).